The primary structure comprises 291 residues: ATP synthase gamma chain (291 aa).

It belongs to the ATPase gamma chain family. In terms of assembly, F-type ATPases have 2 components, CF(1) - the catalytic core - and CF(0) - the membrane proton channel. CF(1) has five subunits: alpha(3), beta(3), gamma(1), delta(1), epsilon(1). CF(0) has three main subunits: a, b and c.

It is found in the cell inner membrane. Functionally, produces ATP from ADP in the presence of a proton gradient across the membrane. The gamma chain is believed to be important in regulating ATPase activity and the flow of protons through the CF(0) complex. This is ATP synthase gamma chain from Variovorax paradoxus (strain S110).